We begin with the raw amino-acid sequence, 124 residues long: Schlafen-like protein (124 aa).

The protein belongs to the Schlafen family. Subgroup poxviridae B3 subfamily.

The polypeptide is Schlafen-like protein (Homo sapiens (Human)).